The primary structure comprises 144 residues: Large ribosomal subunit protein uL15 (144 aa).

The segment at 1-58 is disordered; the sequence is MRLNTLSPAAGSKPSKKRVGRGIGSGLGKTGGRGHKGQKSRSGGSVRPGFEGGQMPLK. Residues 21 to 31 are compositionally biased toward gly residues; the sequence is RGIGSGLGKTG.

Belongs to the universal ribosomal protein uL15 family. Part of the 50S ribosomal subunit.

Functionally, binds to the 23S rRNA. The chain is Large ribosomal subunit protein uL15 from Vibrio atlanticus (strain LGP32) (Vibrio splendidus (strain Mel32)).